The sequence spans 81 residues: Apolipoprotein C-I, acidic form (81 aa).

Residues 1–24 form the signal peptide; sequence MRLFLSLLVVVLSIVLEGPTPAQG.

It belongs to the apolipoprotein C1 family.

It is found in the secreted. The polypeptide is Apolipoprotein C-I, acidic form (APOC1A) (Theropithecus gelada (Gelada baboon)).